The following is a 927-amino-acid chain: Nuclear factor of activated T-cells, cytoplasmic 2 (927 aa).

Residues 1–29 (MDVPEPQPDPDGGDGPGHEPGGSPQDELD) form a disordered region. Phosphoserine is present on residues Ser23, Ser53, Ser54, Ser56, Ser99, Ser107, and Ser110. The calcineurin-binding stretch occupies residues 111–116 (PRIEIT). Residues 119-201 (HELMQAGGAL…CVSPNNAGPD (83 aa)) form a transactivation domain A (TAD-A) region. Residues Ser136, Ser150, Ser170, Ser173, Ser174, Ser176, Ser177, Ser179, and Ser182 each carry the phosphoserine modification. The interval 163 to 177 (YREPLCLSPASSGSS) is required for cytoplasmic retention of the phosphorylated form. 2 consecutive repeat copies span residues 186–202 (SPYTSPCVSPNNAGPDD) and 215–231 (SPRTSPIMSPRTSLAED). The interval 186-292 (SPYTSPCVSP…PHVALQDDSI (107 aa)) is 3 X approximate SP repeats. 2 disordered regions span residues 203–299 (LCPQ…YPPT) and 322–341 (SKIWKTSPDPTPVSTAPSKA). Ser215, Ser219, Ser223, Ser238, and Ser245 each carry phosphoserine. Over residues 216–226 (PRTSPIMSPRT) the composition is skewed to polar residues. The Nuclear localization signal motif lies at 253–255 (KRR). Ser257, Ser270, Ser276, Ser278, Ser282, Ser328, and Ser365 each carry phosphoserine. A compositionally biased stretch (low complexity) spans 267-277 (PAASPQRSRSP). The stretch at 274 to 290 (SRSPSPQPSPHVALQDD) is one 3; approximate repeat. The region spanning 394–576 (ASLPPLEWPL…NPIECSQRSA (183 aa)) is the RHD domain. The DNA-binding element occupies 423 to 430 (RAHYETEG). A phosphoserine mark is found at Ser757, Ser759, and Ser761. Disordered regions lie at residues 790 to 812 (AGSQGQGQGSTLPHTSSASQQAS) and 841 to 903 (FGPS…QNLD). A compositionally biased stretch (polar residues) spans 798–812 (GSTLPHTSSASQQAS). Ser860 bears the Phosphoserine mark.

As to quaternary structure, member of the multicomponent NFATC transcription complex that consists of at least two components, a pre-existing cytoplasmic component NFATC2 and an inducible nuclear component NFATC1. Other members such as NFATC4, NFATC3 or members of the activating protein-1 family, MAF, GATA4 and Cbp/p300 can also bind the complex. The phosphorylated form specifically interacts with XPO1; which mediates nuclear export. NFATC proteins bind to DNA as monomers. Interacts with NFATC2IP. Interacts with FOXP3. Interacts with TBX21 ('Thr-302' phosphorylated form). Interacts with KAT2A. Interacts with HOMER2 and HOMER3; this interaction competes with calcineurin/PPP3CA-binding and hence prevents NFATC2 dephosphorylation and activation. Interacts with protein phosphatase PPP3CA/calcineurin A. Interacts with AKAP5 (via leucine zipper domain); this is required for NFATC2/NFAT1 recruitment to CRAC channels. In resting cells, phosphorylated by NFATC-kinase on at least 18 sites in the 99-365 region. Upon cell stimulation, all these sites except Ser-245 are dephosphorylated by calcineurin. Dephosphorylation induces a conformational change that simultaneously exposes an NLS and masks an NES, which results in nuclear localization. Simultaneously, one site among Ser-53; Ser-54 and Ser-56 is phosphorylated; which is required for full transcriptional activity. In terms of processing, ubiquitinated in endothelial cells by RNF213 downstream of the non-canonical Wnt signaling pathway, leading to its degradation by the proteasome. As to expression, expressed in spleen, heart, testis, brain, placenta, muscle and pancreas. Expressed in the thymus. Expressed in the lung. Expressed in cartilage.

Its subcellular location is the cytoplasm. The protein localises to the nucleus. Plays a role in the inducible expression of cytokine genes in T cells, especially in the induction of the IL-2, IL-3, IL-4, TNF-alpha or GM-CSF. Promotes invasive migration through the activation of GPC6 expression and WNT5A signaling pathway. Is involved in the negative regulation of chondrogenesis. Recruited by AKAP5 to ORAI1 pore-forming subunit of CRAC channels in Ca(2+) signaling microdomains where store-operated Ca(2+) influx is coupled to calmodulin and calcineurin signaling and activation of NFAT-dependent transcriptional responses. This Mus musculus (Mouse) protein is Nuclear factor of activated T-cells, cytoplasmic 2 (Nfatc2).